The following is a 386-amino-acid chain: Tryptophan--tRNA ligase (386 aa).

Positions 82–90 match the 'HIGH' region motif; that stretch reads PSGPMHIGH. The short motif at 253–257 is the 'KMSKS' region element; that stretch reads KMSAS.

The protein belongs to the class-I aminoacyl-tRNA synthetase family.

Its subcellular location is the cytoplasm. The enzyme catalyses tRNA(Trp) + L-tryptophan + ATP = L-tryptophyl-tRNA(Trp) + AMP + diphosphate + H(+). This Pyrococcus horikoshii (strain ATCC 700860 / DSM 12428 / JCM 9974 / NBRC 100139 / OT-3) protein is Tryptophan--tRNA ligase.